The following is a 92-amino-acid chain: UPF0250 protein XAC0666 (92 aa).

This sequence belongs to the UPF0250 family.

This chain is UPF0250 protein XAC0666, found in Xanthomonas axonopodis pv. citri (strain 306).